We begin with the raw amino-acid sequence, 385 residues long: Lipid-A-disaccharide synthase 2 (385 aa).

This sequence belongs to the LpxB family.

The enzyme catalyses a lipid X + a UDP-2-N,3-O-bis[(3R)-3-hydroxyacyl]-alpha-D-glucosamine = a lipid A disaccharide + UDP + H(+). Its pathway is bacterial outer membrane biogenesis; LPS lipid A biosynthesis. Its function is as follows. Condensation of UDP-2,3-diacylglucosamine and 2,3-diacylglucosamine-1-phosphate to form lipid A disaccharide, a precursor of lipid A, a phosphorylated glycolipid that anchors the lipopolysaccharide to the outer membrane of the cell. In Legionella pneumophila (strain Paris), this protein is Lipid-A-disaccharide synthase 2.